The primary structure comprises 254 residues: Trypsin 3A1 (254 aa).

Positions 1-20 (MNQFLFVSFCALLGLSQVSA) are cleaved as a signal peptide. Positions 21-27 (ATLSSGR) are cleaved as a propeptide — activation peptide. The Peptidase S1 domain occupies 28 to 253 (IVGGFQIDIA…VRQWIREVSE (226 aa)). Cys-53 and Cys-69 form a disulfide bridge. Catalysis depends on charge relay system residues His-68 and Asp-113. Cystine bridges form between Cys-178-Cys-194 and Cys-205-Cys-229. Residue Ser-209 is the Charge relay system of the active site.

Belongs to the peptidase S1 family. In terms of tissue distribution, midgut.

It localises to the secreted. It is found in the extracellular space. The enzyme catalyses Preferential cleavage: Arg-|-Xaa, Lys-|-Xaa.. In terms of biological role, major function may be to aid in digestion of the blood meal. The sequence is that of Trypsin 3A1 from Aedes aegypti (Yellowfever mosquito).